Consider the following 1234-residue polypeptide: ATP-dependent helicase/nuclease subunit A (1234 aa).

The UvrD-like helicase ATP-binding domain maps to 9–482 (STWTDDQWEA…IDLNKNFRSR (474 aa)). Residue 30–37 (AAAGSGKT) participates in ATP binding. The 292-residue stretch at 509 to 800 (QAELKLGASY…RMMTIHSSKG (292 aa)) folds into the UvrD-like helicase C-terminal domain.

This sequence belongs to the helicase family. AddA subfamily. Heterodimer of AddA and AddB/RexB. It depends on Mg(2+) as a cofactor.

It catalyses the reaction Couples ATP hydrolysis with the unwinding of duplex DNA by translocating in the 3'-5' direction.. It carries out the reaction ATP + H2O = ADP + phosphate + H(+). Functionally, the heterodimer acts as both an ATP-dependent DNA helicase and an ATP-dependent, dual-direction single-stranded exonuclease. Recognizes the chi site generating a DNA molecule suitable for the initiation of homologous recombination. The AddA nuclease domain is required for chi fragment generation; this subunit has the helicase and 3' -&gt; 5' nuclease activities. The protein is ATP-dependent helicase/nuclease subunit A of Bacillus pumilus (strain SAFR-032).